A 256-amino-acid polypeptide reads, in one-letter code: Homeobox protein goosecoid (256 aa).

Positions 160–219 (KRRHRTIFTDEQLEALENLFQETKYPDVGTREQLARKVHLREEKVEVWFKNRRAKWRRQK) form a DNA-binding region, homeobox. The interval 213 to 256 (AKWRRQKRSSSEESENAEKWNKTSSKASPEKREEEGKSDLDSDS) is disordered. Basic and acidic residues predominate over residues 240–256 (SPEKREEEGKSDLDSDS).

Belongs to the paired homeobox family. Bicoid subfamily. As to expression, in early gastrulation, expressed in the dorsal lip. In later stages of development found in head, limbs and body wall. In the embryo, expressed in the postotic cranial neural crest cells, the frontonasal prominence, the first branchial arch and cleft, and specific regions of large joints.

The protein resides in the nucleus. Regulates chordin (CHRD). May play a role in spatial programing within discrete embryonic fields or lineage compartments during organogenesis. In concert with NKX3-2, plays a role in defining the structural components of the middle ear; required for the development of the entire tympanic ring. Goosecoid-expressing regions of the gastrulating mouse egg cylinder have organizer-like activity when transplanted into Xenopus embryos. Probably involved in the regulatory networks that define neural crest cell fate specification and determine mesoderm cell lineages in mammals. This chain is Homeobox protein goosecoid (Gsc), found in Mus musculus (Mouse).